A 353-amino-acid polypeptide reads, in one-letter code: Peptide chain release factor 1 (353 aa).

Gln230 carries the post-translational modification N5-methylglutamine.

This sequence belongs to the prokaryotic/mitochondrial release factor family. In terms of processing, methylated by PrmC. Methylation increases the termination efficiency of RF1.

Its subcellular location is the cytoplasm. Peptide chain release factor 1 directs the termination of translation in response to the peptide chain termination codons UAG and UAA. This is Peptide chain release factor 1 from Leptospira biflexa serovar Patoc (strain Patoc 1 / ATCC 23582 / Paris).